We begin with the raw amino-acid sequence, 465 residues long: 5'-adenylylsulfate reductase 1, chloroplastic (465 aa).

The transit peptide at 1–53 (MAMSVNVSSSSSSGIINSRFGVSLEPKVSQIGSLRLLDRVHVAPVSLNLSGKR) directs the protein to the chloroplast. The interval 73-327 (LAATMVAEIA…KAKECGLHKG (255 aa)) is reductase domain. The region spanning 344 to 465 (SAVADIFKSE…SLTSFLNLVR (122 aa)) is the Thioredoxin domain. Residues Cys-385 and Cys-388 each act as nucleophile in the active site. A disulfide bond links Cys-385 and Cys-388.

It belongs to the APS reductase family. Requires [4Fe-4S] cluster as cofactor. As to expression, leaves, roots and stem.

The protein resides in the plastid. It is found in the chloroplast. It catalyses the reaction glutathione disulfide + sulfite + AMP + 2 H(+) = adenosine 5'-phosphosulfate + 2 glutathione. With respect to regulation, stimulated by sodium sulfate &gt; ammonium sulfate and is sensitive to inactivation by 5'AMP. In terms of biological role, reduces sulfate for Cys biosynthesis. Substrate preference is adenosine-5'-phosphosulfate (APS) &gt;&gt; 3'-phosphoadenosine-5'-phosphosulfate (PAPS). Uses glutathione or DTT as source of protons. The polypeptide is 5'-adenylylsulfate reductase 1, chloroplastic (APR1) (Arabidopsis thaliana (Mouse-ear cress)).